We begin with the raw amino-acid sequence, 1090 residues long: Nitrogen assimilation transcription factor nit-4 (1090 aa).

A compositionally biased stretch (polar residues) spans M1–A14. Positions M1–N43 are disordered. A DNA-binding region (zn(2)-C6 fungal-type) is located at residues C53–C81. Disordered stretches follow at residues R145 to V176, F666 to P689, H773 to Q798, G825 to P875, Q936 to Q999, and H1033 to G1053. Residues G167–V176 are compositionally biased toward basic and acidic residues. Over residues F666–T677 the composition is skewed to polar residues. The segment covering Q849 to Q859 has biased composition (low complexity). Composition is skewed to gly residues over residues L940–G965 and N976–T988. Residues Q990–Q999 show a composition bias toward low complexity.

The protein resides in the nucleus. Pathway-specific regulatory gene of nitrate assimilation; it activates the transcription of the genes for nitrate and nitrite reductases. The protein is Nitrogen assimilation transcription factor nit-4 (nit-4) of Neurospora crassa (strain ATCC 24698 / 74-OR23-1A / CBS 708.71 / DSM 1257 / FGSC 987).